A 551-amino-acid chain; its full sequence is Cation/acetate symporter ActP (551 aa).

The next 14 helical transmembrane spans lie at 5–25 (HWSA…ALTG), 34–54 (IQAI…TYWA), 77–97 (GLAI…SALV), 104–124 (GLIY…LIAE), 150–170 (LSAC…MVGA), 184–204 (VAVV…GMLA), 207–227 (WVQI…AIMV), 263–283 (ISAL…PHIL), 304–324 (GFIG…ILLV), 356–376 (FFLG…VAGL), 406–426 (VSKI…ILFE), 430–450 (IAFM…PIII), 469–489 (LGLS…VTIL), and 498–518 (YEYP…FFSI).

It belongs to the sodium:solute symporter (SSF) (TC 2.A.21) family.

The protein resides in the cell inner membrane. Functionally, transports acetate. This chain is Cation/acetate symporter ActP, found in Yersinia pestis bv. Antiqua (strain Antiqua).